Consider the following 162-residue polypeptide: Peptidyl-prolyl cis-trans isomerase (162 aa).

In terms of domain architecture, PPIase cyclophilin-type spans 5-161; that stretch reads FFDVQFGGDA…TTIKIVDSGV (157 aa).

This sequence belongs to the cyclophilin-type PPIase family. PPIase A subfamily.

It carries out the reaction [protein]-peptidylproline (omega=180) = [protein]-peptidylproline (omega=0). Its activity is regulated as follows. Binds cyclosporin A (CsA). CsA mediates some of its effects via an inhibitory action on PPIase. Functionally, PPIases accelerate the folding of proteins. It catalyzes the cis-trans isomerization of proline imidic peptide bonds in oligopeptides. This chain is Peptidyl-prolyl cis-trans isomerase, found in Paramecium primaurelia.